The following is a 249-amino-acid chain: 2,3-bisphosphoglycerate-dependent phosphoglycerate mutase (249 aa).

Substrate contacts are provided by residues 8-15 (RHGESTWN), 21-22 (TG), R60, 87-90 (ERHY), K98, 114-115 (RR), and 183-184 (GN). H9 (tele-phosphohistidine intermediate) is an active-site residue. E87 (proton donor/acceptor) is an active-site residue.

This sequence belongs to the phosphoglycerate mutase family. BPG-dependent PGAM subfamily. In terms of assembly, homodimer.

The catalysed reaction is (2R)-2-phosphoglycerate = (2R)-3-phosphoglycerate. It functions in the pathway carbohydrate degradation; glycolysis; pyruvate from D-glyceraldehyde 3-phosphate: step 3/5. In terms of biological role, catalyzes the interconversion of 2-phosphoglycerate and 3-phosphoglycerate. The chain is 2,3-bisphosphoglycerate-dependent phosphoglycerate mutase from Aromatoleum aromaticum (strain DSM 19018 / LMG 30748 / EbN1) (Azoarcus sp. (strain EbN1)).